We begin with the raw amino-acid sequence, 484 residues long: tRNA sulfurtransferase (484 aa).

Residues 61-166 (PHLIELLQCI…DKLLFIQARH (106 aa)) enclose the THUMP domain. ATP is bound by residues 183-184 (LI), lysine 265, glycine 287, and glutamine 296. A disulfide bond links cysteine 344 and cysteine 456. The Rhodanese domain occupies 404 to 483 (LGENDVILDI…FNNVQVFVKA (80 aa)). Cysteine 456 serves as the catalytic Cysteine persulfide intermediate.

This sequence belongs to the ThiI family.

It localises to the cytoplasm. The catalysed reaction is [ThiI sulfur-carrier protein]-S-sulfanyl-L-cysteine + a uridine in tRNA + 2 reduced [2Fe-2S]-[ferredoxin] + ATP + H(+) = [ThiI sulfur-carrier protein]-L-cysteine + a 4-thiouridine in tRNA + 2 oxidized [2Fe-2S]-[ferredoxin] + AMP + diphosphate. It carries out the reaction [ThiS sulfur-carrier protein]-C-terminal Gly-Gly-AMP + S-sulfanyl-L-cysteinyl-[cysteine desulfurase] + AH2 = [ThiS sulfur-carrier protein]-C-terminal-Gly-aminoethanethioate + L-cysteinyl-[cysteine desulfurase] + A + AMP + 2 H(+). It participates in cofactor biosynthesis; thiamine diphosphate biosynthesis. Functionally, catalyzes the ATP-dependent transfer of a sulfur to tRNA to produce 4-thiouridine in position 8 of tRNAs, which functions as a near-UV photosensor. Also catalyzes the transfer of sulfur to the sulfur carrier protein ThiS, forming ThiS-thiocarboxylate. This is a step in the synthesis of thiazole, in the thiamine biosynthesis pathway. The sulfur is donated as persulfide by IscS. This chain is tRNA sulfurtransferase, found in Actinobacillus succinogenes (strain ATCC 55618 / DSM 22257 / CCUG 43843 / 130Z).